The following is a 410-amino-acid chain: Arginine deiminase (410 aa).

The active-site Amidino-cysteine intermediate is Cys-400.

Belongs to the arginine deiminase family.

It is found in the cytoplasm. The enzyme catalyses L-arginine + H2O = L-citrulline + NH4(+). The protein operates within amino-acid degradation; L-arginine degradation via ADI pathway; carbamoyl phosphate from L-arginine: step 1/2. This is Arginine deiminase from Bacillus thuringiensis subsp. konkukian (strain 97-27).